The following is a 150-amino-acid chain: Galactose-binding lectin (150 aa).

2 residues coordinate D-galactose: H16 and G19. N26 carries an N-linked (GlcNAc...) asparagine glycan. D-galactose-binding positions include N27, 35–37 (DIH), H64, and G67. Residue N74 is glycosylated (N-linked (GlcNAc...) asparagine). Residues E75, 83–85 (DRH), H108, and G111 contribute to the D-galactose site. N-linked (GlcNAc...) asparagine glycosylation occurs at N118. D-galactose is bound by residues N119 and 127–129 (DKH).

Monomer in solution. Homodimer in solution. Exists as a monomer in solution when a low concentration (0.001 mg/ml) of it is present. Homodimers start to appear at a concentration of 0.01 mg/ml and tetramers at a concentration of 0.1 mg/ml. As to expression, highly expressed in mantle and to a lesser extent in muscle, hepatopancreas, gill and hemocytes.

Its activity is regulated as follows. Bacterial binding activity is inhibited by D-galactose. Hemagglutinating activity is independent of divalent cations Ca2(+) or Mg2(+). It is strongly inhibited by N-acetyl-D-galactosamine (GalNAc), D-galactose and D-talose, and to a lesser extent by melibiose and raffinose. Also inhibited by glycoprotein asialo-bovine submaxillary mucin (BSM). Not inhibited by D-glucose, D-fucose, D-galactitol, N-acetyl-D-glucosamine or lactose. Fungal binding activity is inhibited by D-galactose. Cytotoxic activity against Raji cell line is completely inhibited by galactose, melibiose and raffinose, but not by glucose or lactose. Galactose inhibits binding to laminin and BSM, but not to collagen, gelatin or fibronectin. Functionally, galactose-binding lectin. Binds both alpha and beta anomer of galactose (Gal), but has a stronger interaction with the glycans having alpha Gal at the non-reducing end and binds beta Gal weakly only in highly branched glycans. Has high affinity to Galalpha1-4Galbeta1-4GlcNAc. Binds N-acetyl-2-deoxy-2-amino-galactose (2-deoxy-GalNAc). Binds N-acetylgalactosamine (GalNAc). Binds porcine stomach mucin (PSM) with high affinity. Binds galactosamine. Binds laminin, bovine submaxillary mucin (BSM), fibronectin, type I collagen and gelatin with a decreasing affinity, respectively. Has hemagglutinating activity towards human type A erythrocytes. Also hemagglutinates human type 0, B and AB erythrocytes as well as rabbit and mouse erythrocytes. Agglutinates both Gram-positive and Gram-negative bacteria including B.subtilis ATCC 6633, S.aureus ATCC 21027 and E.coli 3254, respectively. No agglutination activity towards Gram-positive S.amurskyense CMM 3673. Has bacteriostatic activity on S.amurskyense CMM 3673, B.subtilis ATCC 6633, S.aureus ATCC 21027 and E.coli 3254. However, has no agglutination nor bacteriostatic activity on Gram-negative C.scophthalmum CIP 104199 or A.troitsensis KMM 3674. Inhibits growth of fungi from the genera Aspergillus, Penicillium, Trichoderma and st. Mycelia. Inhibits germination of spores and hyphal growth of them. Has dose-dependent cytotoxic effect on the human globotriaosylceramide (Gb3)-expressing Burkitt's lymphoma (Raji) cell line. Binds to Gb3 in these cells leading to activation of caspase-9/3 and PARP. Has dose-dependent cytotoxic effect on the Gb3-expressing human MCF-7 breast cancer cell line. No cytotoxic effect on myelogenous leukemia K562 cell line, which does not express Gb3. Activates immune responses in mice and increases cytokine production of TNF-alpha, IL-6 and MCP-1 in the serum and the peritoneal lavage of mice. Induces TNF-alpha and IL-6 secretion in mouse RAW264.7 macrophages, mouse bone marrow-derived macrophages, human THP-1 macrophages, human peripheral blood mononuclear cells (PBMCs) and human blood monocyte-derived macrophages. TNF-alpha production in macrophages could not be inhibited by GalNAc, GalN or Gal, indicating that induced cytokine production is separate from its sugar binding activity. Increases intracellular reactive oxygen species levels, expression and phosphorylation of protein kinases PKC alpha/delta, expression of COX-2 and NF-kappaB, and activates the MAPK pathway by increasing the phosphorylation of ERK1/2, JNK1/2 and p38 in mouse RAW264.7 macrophages. Induces endotoxin tolerance in lipopolysaccharide(LPS)-activated macrophages by down-regulating IRAK2 expression, reducing JNK1/2 phosphorylation and NF-kappaB activation. Can slightly increase the bactericidal activity of RAW264.7 macrophages. Has DNA-binding activity. Recognizes pathogen-associated molecular patterns (PAMPs) and binds to LPS from E.coli, but has only little binding to beta-1,3-glucan from E.gracilis and peptidoglycan from S.aureus. Activates secretion of TNF-alpha and IFN-gamma by the human peripheral blood cells (HPBCs). May be involved in innate immunity acting as an antibacterial and antifungal agent involved in the recognition and clearance of pathogens. The chain is Galactose-binding lectin from Crenomytilus grayanus (Gray mussel).